The chain runs to 193 residues: Corrinoid adenosyltransferase (193 aa).

ATP is bound by residues 5-13 (TKTGDKGQT), lysine 22, 130-135 (RRAERR), and asparagine 154.

It belongs to the Cob(I)alamin adenosyltransferase family. In terms of assembly, homotrimer.

It is found in the cytoplasm. It carries out the reaction 2 cob(II)yrinate a,c diamide + reduced [electron-transfer flavoprotein] + 2 ATP = 2 adenosylcob(III)yrinate a,c-diamide + 2 triphosphate + oxidized [electron-transfer flavoprotein] + 3 H(+). The enzyme catalyses 2 cob(II)alamin + reduced [electron-transfer flavoprotein] + 2 ATP = 2 adenosylcob(III)alamin + 2 triphosphate + oxidized [electron-transfer flavoprotein] + 3 H(+). Its pathway is cofactor biosynthesis; adenosylcobalamin biosynthesis; adenosylcobalamin from cob(II)yrinate a,c-diamide: step 2/7. The sequence is that of Corrinoid adenosyltransferase (yvqK) from Bacillus subtilis (strain 168).